The sequence spans 682 residues: Homeobox-leucine zipper protein HDG7 (682 aa).

The segment at 33-65 (LSDDSFDAMSGDEDKQEQRPKKKKRKTKYHRHT) is disordered. The segment covering 52–65 (PKKKKRKTKYHRHT) has biased composition (basic residues). Residues 57-116 (RKTKYHRHTSYQIQELESFFKECPHPNEKQRLELGKKLTLESKQIKFWFQNRRTQMKTQL) constitute a DNA-binding region (homeobox). Residues 105–186 (FQNRRTQMKT…LDRICALANR (82 aa)) adopt a coiled-coil conformation. One can recognise an START domain in the interval 214 to 429 (SGGTSLMFMD…LQRQCESFTM (216 aa)).

Belongs to the HD-ZIP homeobox family. Class IV subfamily. Interacts with AIL7/PLT7. As to expression, expressed in cells around the base of leaf primordia, in the outermost 2 to 3 cell layers along the boundary between two leaf primordia. Expressed in lateral root primordia and tips, and in the epidermal boundaries of two cotyledons at heart-stage embryo.

The protein resides in the nucleus. Functionally, probable transcription factor that binds to the DNA sequence 5'-GCATTAAATGC-3'. Seems to promote cell differentiation. This Arabidopsis thaliana (Mouse-ear cress) protein is Homeobox-leucine zipper protein HDG7.